Here is a 396-residue protein sequence, read N- to C-terminus: MTINPVSRKVAWLRVVTLAIAAFIFNTTEFVPVGLLSDIAESFHMQTAQVGIMLTIYAWVVAVMSLPFMLLTSQIERRKLLICLFVLFIASHVLSFLAWNFTVLVISRIGIAFTHAIFWSITASLAIRLAPAGKRAQALSLIATGTALAMVLGLPIGRVVGQYFGWRTTFFAIGMGALITLICLIKLLPKLPSEHSGSLKSLPLLFRRPALMSLYLLTAVVVTAHYTAYSYIEPFVQNVAGLSANFATVLLLILGGAGIIGSLVFGKLGNQHASLLVSIAISLLVVCLLLLLPAADSEAHLALLSIFWGIAIMVIGLGMQVKVLALAPDATDVAMALFSGIFNIGIGAGALAGNQVSLHWSMSTIGYIGAVPACAALVWAVLIFRKWPVTLEEQPR.

12 consecutive transmembrane segments (helical) span residues 15–35, 50–70, 81–101, 103–123, 136–156, 169–189, 209–229, 246–266, 275–295, 301–321, 333–353, and 364–384; these read VVTL…PVGL, VGIM…PFML, LICL…AWNF, VLVI…SITA, AQAL…GLPI, TFFA…KLLP, PALM…YTAY, FATV…LVFG, LLVS…LPAA, LALL…GMQV, VAMA…ALAG, and TIGY…VLIF.

This sequence belongs to the major facilitator superfamily. SotB (TC 2.A.1.2) family.

Its subcellular location is the cell inner membrane. Functionally, involved in the efflux of sugars. The physiological role may be the reduction of the intracellular concentration of toxic sugars or sugar metabolites. This is Probable sugar efflux transporter from Salmonella arizonae (strain ATCC BAA-731 / CDC346-86 / RSK2980).